A 653-amino-acid chain; its full sequence is Elongation factor 4 (653 aa).

The tract at residues 1 to 30 (MRTPCSQHRRDRPSAIGSQLPDADTLDTRQ) is disordered. One can recognise a tr-type G domain in the interval 50-231 (AQIRNFCIIA…EVVRQVPPPQ (182 aa)). GTP contacts are provided by residues 62 to 67 (DHGKST) and 178 to 181 (NKID).

This sequence belongs to the TRAFAC class translation factor GTPase superfamily. Classic translation factor GTPase family. LepA subfamily.

It localises to the cell membrane. The catalysed reaction is GTP + H2O = GDP + phosphate + H(+). Functionally, required for accurate and efficient protein synthesis under certain stress conditions. May act as a fidelity factor of the translation reaction, by catalyzing a one-codon backward translocation of tRNAs on improperly translocated ribosomes. Back-translocation proceeds from a post-translocation (POST) complex to a pre-translocation (PRE) complex, thus giving elongation factor G a second chance to translocate the tRNAs correctly. Binds to ribosomes in a GTP-dependent manner. The sequence is that of Elongation factor 4 from Mycobacterium bovis (strain ATCC BAA-935 / AF2122/97).